Here is a 394-residue protein sequence, read N- to C-terminus: Serine palmitoyltransferase (394 aa).

Residues 111 to 112 (GF), serine 183, histidine 211, and threonine 239 each bind pyridoxal 5'-phosphate. Lysine 242 is modified (N6-(pyridoxal phosphate)lysine).

It belongs to the class-II pyridoxal-phosphate-dependent aminotransferase family. Pyridoxal 5'-phosphate is required as a cofactor.

It catalyses the reaction L-serine + hexadecanoyl-CoA + H(+) = 3-oxosphinganine + CO2 + CoA. It functions in the pathway lipid metabolism; sphingolipid metabolism. Functionally, involved in de novo bacterial ceramide synthesis. Catalyzes the condensation of L-serine with palmitoyl-CoA (hexadecanoyl-CoA) to produce 3-oxosphinganine. Also capable of using alanine as substrate leading to the formation of 1-deoxysphinganine (1-deoxySa). Contributes to the levels of endogenous sphingolipids in its host. In Bacteroides thetaiotaomicron (strain ATCC 29148 / DSM 2079 / JCM 5827 / CCUG 10774 / NCTC 10582 / VPI-5482 / E50), this protein is Serine palmitoyltransferase.